Consider the following 706-residue polypeptide: D-(-)-3-hydroxybutyrate oligomer hydrolase (706 aa).

The signal sequence occupies residues 1-27; sequence MTIIIAGKNTLTLTSLAAAVLALGACG. The active-site Charge relay system is Ser-311.

The protein belongs to the D-(-)-3-hydroxybutyrate oligomer hydrolase family.

Its subcellular location is the secreted. The enzyme catalyses (3R)-hydroxybutanoate dimer + H2O = 2 (R)-3-hydroxybutanoate + H(+). It participates in lipid metabolism; butanoate metabolism. Functionally, participates in the degradation of poly-3-hydroxybutyrate (PHB). It works downstream of poly(3-hydroxybutyrate) depolymerase, hydrolyzing D(-)-3-hydroxybutyrate oligomers of various length (3HB-oligomers) into 3HB-monomers. The chain is D-(-)-3-hydroxybutyrate oligomer hydrolase from Polaromonas naphthalenivorans (strain CJ2).